The primary structure comprises 397 residues: Cercosporin biosynthesis regulatory protein CTB8 (397 aa).

Positions 26–53 form a DNA-binding region, zn(2)-C6 fungal-type; sequence CTHCSSQKIRCTKERPACARCVNKGLLC. Disordered regions lie at residues 62–92 and 173–198; these read GTRR…DSVK and AEAS…ATTH. Positions 74–87 are enriched in polar residues; it reads PETTISNAPTSSVP. The span at 179–197 shows a compositional bias: low complexity; the sequence is PSSSSSPPSQRSDGGRATT.

The protein resides in the nucleus. In terms of biological role, transcription regulator of the gene cluster that mediates the biosynthesis of cercosporin, a light-activated, non-host-selective toxin. The perylenequinone chromophore of cercosporin absorbs light energy to attain an electronically-activated triplet state and produces active oxygen species such as the hydroxyl radical, superoxide, hydrogen peroxide or singlet oxygen upon reaction with oxygen molecules. These reactive oxygen species cause damage to various cellular components including lipids, proteins and nucleic acids. The polypeptide is Cercosporin biosynthesis regulatory protein CTB8 (Cercospora nicotianae (Barn spot disease fungus)).